The following is a 523-amino-acid chain: ATP-dependent RNA helicase DBP3 (523 aa).

Residues M1 to K21 show a composition bias toward basic and acidic residues. Residues M1–A71 form a disordered region. A compositionally biased stretch (basic residues) spans K22–E48. The segment covering K49 to E67 has biased composition (basic and acidic residues). The short motif at L114–A140 is the Q motif element. In terms of domain architecture, Helicase ATP-binding spans W143–V315. A156–T163 serves as a coordination point for ATP. The DEAD box signature appears at D262–D265. The Helicase C-terminal domain maps to K344–G493.

Belongs to the DEAD box helicase family. DDX5/DBP2 subfamily.

It is found in the nucleus. The protein resides in the nucleolus. The catalysed reaction is ATP + H2O = ADP + phosphate + H(+). Functionally, ATP-dependent RNA helicase required for 60S ribosomal subunit synthesis. Involved in efficient pre-rRNA processing, predominantly at site A3, which is necessary for the normal formation of 25S and 5.8S rRNAs. This Saccharomyces cerevisiae (strain ATCC 204508 / S288c) (Baker's yeast) protein is ATP-dependent RNA helicase DBP3 (DBP3).